The chain runs to 616 residues: 1-deoxy-D-xylulose-5-phosphate synthase (616 aa).

Thiamine diphosphate contacts are provided by residues His74 and 115–117; that span reads GHS. Asp146 lines the Mg(2+) pocket. Residues 147–148, Asn175, Tyr282, and Glu365 contribute to the thiamine diphosphate site; that span reads GA. Mg(2+) is bound at residue Asn175.

This sequence belongs to the transketolase family. DXPS subfamily. Homodimer. The cofactor is Mg(2+). It depends on thiamine diphosphate as a cofactor.

It carries out the reaction D-glyceraldehyde 3-phosphate + pyruvate + H(+) = 1-deoxy-D-xylulose 5-phosphate + CO2. The protein operates within metabolic intermediate biosynthesis; 1-deoxy-D-xylulose 5-phosphate biosynthesis; 1-deoxy-D-xylulose 5-phosphate from D-glyceraldehyde 3-phosphate and pyruvate: step 1/1. Functionally, catalyzes the acyloin condensation reaction between C atoms 2 and 3 of pyruvate and glyceraldehyde 3-phosphate to yield 1-deoxy-D-xylulose-5-phosphate (DXP). This Chromobacterium violaceum (strain ATCC 12472 / DSM 30191 / JCM 1249 / CCUG 213 / NBRC 12614 / NCIMB 9131 / NCTC 9757 / MK) protein is 1-deoxy-D-xylulose-5-phosphate synthase.